Consider the following 495-residue polypeptide: Thiosulfate sulfurtransferase/rhodanese-like domain-containing protein 2 (495 aa).

At S268 the chain carries Phosphoserine. Residues 300–395 (EQGNTIILDC…YLEEFPDGFY (96 aa)) form the Rhodanese domain. The active-site Cysteine persulfide intermediate is C354.

The chain is Thiosulfate sulfurtransferase/rhodanese-like domain-containing protein 2 (Tstd2) from Mus musculus (Mouse).